Reading from the N-terminus, the 469-residue chain is Siroheme synthase (469 aa).

The precorrin-2 dehydrogenase /sirohydrochlorin ferrochelatase stretch occupies residues 1-203 (MDYLPIFTDL…GQEQDAKQEL (203 aa)). NAD(+) is bound by residues 22–23 (DV) and 43–44 (PV). Ser-128 is subject to Phosphoserine. Residues 214 to 469 (GQVALIGSGP…LQQSAVVKLA (256 aa)) are uroporphyrinogen-III C-methyltransferase. Pro-223 serves as a coordination point for S-adenosyl-L-methionine. Asp-246 (proton acceptor) is an active-site residue. Lys-268 (proton donor) is an active-site residue. Residues 299 to 301 (GGD), Val-304, 329 to 330 (TA), Met-381, and Gly-410 each bind S-adenosyl-L-methionine.

In the N-terminal section; belongs to the precorrin-2 dehydrogenase / sirohydrochlorin ferrochelatase family. The protein in the C-terminal section; belongs to the precorrin methyltransferase family.

It carries out the reaction uroporphyrinogen III + 2 S-adenosyl-L-methionine = precorrin-2 + 2 S-adenosyl-L-homocysteine + H(+). The enzyme catalyses precorrin-2 + NAD(+) = sirohydrochlorin + NADH + 2 H(+). The catalysed reaction is siroheme + 2 H(+) = sirohydrochlorin + Fe(2+). It participates in cofactor biosynthesis; adenosylcobalamin biosynthesis; precorrin-2 from uroporphyrinogen III: step 1/1. The protein operates within cofactor biosynthesis; adenosylcobalamin biosynthesis; sirohydrochlorin from precorrin-2: step 1/1. Its pathway is porphyrin-containing compound metabolism; siroheme biosynthesis; precorrin-2 from uroporphyrinogen III: step 1/1. It functions in the pathway porphyrin-containing compound metabolism; siroheme biosynthesis; siroheme from sirohydrochlorin: step 1/1. It participates in porphyrin-containing compound metabolism; siroheme biosynthesis; sirohydrochlorin from precorrin-2: step 1/1. Multifunctional enzyme that catalyzes the SAM-dependent methylations of uroporphyrinogen III at position C-2 and C-7 to form precorrin-2 via precorrin-1. Then it catalyzes the NAD-dependent ring dehydrogenation of precorrin-2 to yield sirohydrochlorin. Finally, it catalyzes the ferrochelation of sirohydrochlorin to yield siroheme. This chain is Siroheme synthase, found in Photobacterium profundum (strain SS9).